Consider the following 199-residue polypeptide: 7-methyl-GTP pyrophosphatase (199 aa).

The Proton acceptor role is filled by Asp74.

It belongs to the Maf family. YceF subfamily. It depends on a divalent metal cation as a cofactor.

The protein localises to the cytoplasm. The catalysed reaction is N(7)-methyl-GTP + H2O = N(7)-methyl-GMP + diphosphate + H(+). Nucleoside triphosphate pyrophosphatase that hydrolyzes 7-methyl-GTP (m(7)GTP). May have a dual role in cell division arrest and in preventing the incorporation of modified nucleotides into cellular nucleic acids. This Albidiferax ferrireducens (strain ATCC BAA-621 / DSM 15236 / T118) (Rhodoferax ferrireducens) protein is 7-methyl-GTP pyrophosphatase.